The following is a 398-amino-acid chain: Probable aminomethyltransferase (398 aa).

The protein belongs to the GcvT family. In terms of assembly, the glycine cleavage system is composed of four proteins: P, T, L and H.

It carries out the reaction N(6)-[(R)-S(8)-aminomethyldihydrolipoyl]-L-lysyl-[protein] + (6S)-5,6,7,8-tetrahydrofolate = N(6)-[(R)-dihydrolipoyl]-L-lysyl-[protein] + (6R)-5,10-methylene-5,6,7,8-tetrahydrofolate + NH4(+). Functionally, the glycine cleavage system catalyzes the degradation of glycine. The polypeptide is Probable aminomethyltransferase (Thermococcus gammatolerans (strain DSM 15229 / JCM 11827 / EJ3)).